The following is a 454-amino-acid chain: Putative F-box/LRR-repeat protein At3g58880 (454 aa).

In terms of domain architecture, F-box spans 2–48 (VDLVSSLPDDLLGHILSLLTTKEAALTSILSKRWRYLIAFVPYLEFD). LRR repeat units lie at residues 77-102 (LALHGDSPIRKFSLKCKTGVDLDLLN), 144-168 (SGCRIAFGPEHISALPMLKTLTLDS), 169-194 (VSWSDSGQLERLLSACPALEALNLAN), 214-240 (IKSVSLSGPAHVFSFDTPNLLCLNYTA), 270-301 (LVSVRKNGLLMLSEVQKLIRGISSVRKLYLSP), 303-327 (TLQVLGQCSQAMPVFNNLTFLVIES), and 328-353 (SMDIRWQAMPVLLKNCPRLETLVIKG).

The sequence is that of Putative F-box/LRR-repeat protein At3g58880 from Arabidopsis thaliana (Mouse-ear cress).